The chain runs to 379 residues: Cytochrome b (379 aa).

Transmembrane regions (helical) follow at residues 33-53 (FGSL…FLAM), 77-98 (WLIR…YLHI), 113-133 (WNIG…GYVL), and 178-198 (FFAF…LHLL). Heme b-binding residues include His83 and His97. Heme b contacts are provided by His182 and His196. His201 contacts a ubiquinone. 4 helical membrane-spanning segments follow: residues 226–246 (YKDL…ALFY), 288–308 (LGGV…PILH), 320–340 (ASQL…WIGG), and 347–367 (YIII…VLNP).

This sequence belongs to the cytochrome b family. The cytochrome bc1 complex contains 3 respiratory subunits (MT-CYB, CYC1 and UQCRFS1), 2 core proteins (UQCRC1 and UQCRC2) and probably 6 low-molecular weight proteins. Heme b is required as a cofactor.

The protein resides in the mitochondrion inner membrane. Component of the ubiquinol-cytochrome c reductase complex (complex III or cytochrome b-c1 complex) that is part of the mitochondrial respiratory chain. The b-c1 complex mediates electron transfer from ubiquinol to cytochrome c. Contributes to the generation of a proton gradient across the mitochondrial membrane that is then used for ATP synthesis. The chain is Cytochrome b (mt-cyb) from Anguilla anguilla (European freshwater eel).